We begin with the raw amino-acid sequence, 231 residues long: MDDIPDRIEHTVLGPTTTPADVRTCLDEALQYGMRACIPPWAVPLATEYANVPLTAVIDFPHGQGQTDSVCQAAKLAWDAGADELDMVCNVGLLKAGEDDAVRDHITEVVASVPVPVKVIVEAPLLSDAELERVGQLVADADAAYLKTATGFSEGGATVHDVEILSKYLPVKASGGVGSWADAKAMFEAGAERIGASSGDTIVREWQAETAGETVTEPESDRDGADTTDGY.

The Proton donor/acceptor role is filled by D86. Residue K147 is the Schiff-base intermediate with acetaldehyde of the active site. K172 serves as the catalytic Proton donor/acceptor. A disordered region spans residues 206 to 231 (WQAETAGETVTEPESDRDGADTTDGY).

This sequence belongs to the DeoC/FbaB aldolase family. DeoC type 1 subfamily.

It is found in the cytoplasm. It catalyses the reaction 2-deoxy-D-ribose 5-phosphate = D-glyceraldehyde 3-phosphate + acetaldehyde. The protein operates within carbohydrate degradation; 2-deoxy-D-ribose 1-phosphate degradation; D-glyceraldehyde 3-phosphate and acetaldehyde from 2-deoxy-alpha-D-ribose 1-phosphate: step 2/2. In terms of biological role, catalyzes a reversible aldol reaction between acetaldehyde and D-glyceraldehyde 3-phosphate to generate 2-deoxy-D-ribose 5-phosphate. This Haloarcula marismortui (strain ATCC 43049 / DSM 3752 / JCM 8966 / VKM B-1809) (Halobacterium marismortui) protein is Deoxyribose-phosphate aldolase.